The chain runs to 454 residues: Bifunctional protein GlmU (454 aa).

Residues 1–226 (MSTTVIILAA…AFEVEGVNDR (226 aa)) are pyrophosphorylase. UDP-N-acetyl-alpha-D-glucosamine-binding positions include 8 to 11 (LAAG), K22, Q73, 78 to 79 (GT), 100 to 102 (YGD), G137, E151, N166, and N224. Residue D102 participates in Mg(2+) binding. N224 contributes to the Mg(2+) binding site. A linker region spans residues 227-247 (LQLAALEREFQKQQAKELMQQ). Positions 248 to 454 (GVTFADPARF…NYQRPQKLKK (207 aa)) are N-acetyltransferase. R330 and K348 together coordinate UDP-N-acetyl-alpha-D-glucosamine. The Proton acceptor role is filled by H360. Positions 363 and 374 each coordinate UDP-N-acetyl-alpha-D-glucosamine. Acetyl-CoA-binding positions include A377, 383 to 384 (NY), S402, A420, and R437.

This sequence in the N-terminal section; belongs to the N-acetylglucosamine-1-phosphate uridyltransferase family. It in the C-terminal section; belongs to the transferase hexapeptide repeat family. Homotrimer. Mg(2+) serves as cofactor.

The protein resides in the cytoplasm. It carries out the reaction alpha-D-glucosamine 1-phosphate + acetyl-CoA = N-acetyl-alpha-D-glucosamine 1-phosphate + CoA + H(+). The enzyme catalyses N-acetyl-alpha-D-glucosamine 1-phosphate + UTP + H(+) = UDP-N-acetyl-alpha-D-glucosamine + diphosphate. It participates in nucleotide-sugar biosynthesis; UDP-N-acetyl-alpha-D-glucosamine biosynthesis; N-acetyl-alpha-D-glucosamine 1-phosphate from alpha-D-glucosamine 6-phosphate (route II): step 2/2. The protein operates within nucleotide-sugar biosynthesis; UDP-N-acetyl-alpha-D-glucosamine biosynthesis; UDP-N-acetyl-alpha-D-glucosamine from N-acetyl-alpha-D-glucosamine 1-phosphate: step 1/1. It functions in the pathway bacterial outer membrane biogenesis; LPS lipid A biosynthesis. Catalyzes the last two sequential reactions in the de novo biosynthetic pathway for UDP-N-acetylglucosamine (UDP-GlcNAc). The C-terminal domain catalyzes the transfer of acetyl group from acetyl coenzyme A to glucosamine-1-phosphate (GlcN-1-P) to produce N-acetylglucosamine-1-phosphate (GlcNAc-1-P), which is converted into UDP-GlcNAc by the transfer of uridine 5-monophosphate (from uridine 5-triphosphate), a reaction catalyzed by the N-terminal domain. This chain is Bifunctional protein GlmU, found in Acinetobacter baumannii (strain ACICU).